Consider the following 211-residue polypeptide: 3-demethoxyubiquinol 3-hydroxylase (211 aa).

6 residues coordinate Fe cation: Glu-60, Glu-90, His-93, Glu-142, Glu-174, and His-177.

This sequence belongs to the COQ7 family. Fe cation serves as cofactor.

It is found in the cell membrane. It catalyses the reaction a 5-methoxy-2-methyl-3-(all-trans-polyprenyl)benzene-1,4-diol + AH2 + O2 = a 3-demethylubiquinol + A + H2O. The protein operates within cofactor biosynthesis; ubiquinone biosynthesis. Its function is as follows. Catalyzes the hydroxylation of 2-nonaprenyl-3-methyl-6-methoxy-1,4-benzoquinol during ubiquinone biosynthesis. This is 3-demethoxyubiquinol 3-hydroxylase from Acinetobacter baumannii (strain AB307-0294).